We begin with the raw amino-acid sequence, 359 residues long: Outer membrane protein P2 (359 aa).

The N-terminal stretch at 1–20 (MKKTLAALIVGAFAASAANA) is a signal peptide.

Belongs to the Gram-negative porin family. In terms of assembly, homotrimer.

The protein localises to the cell outer membrane. In terms of biological role, forms pores that allow passive diffusion of small molecules across the outer membrane. In Haemophilus influenzae (strain ATCC 51907 / DSM 11121 / KW20 / Rd), this protein is Outer membrane protein P2 (ompP2).